Reading from the N-terminus, the 234-residue chain is Large ribosomal subunit protein uL1 (234 aa).

Belongs to the universal ribosomal protein uL1 family. In terms of assembly, part of the 50S ribosomal subunit.

Functionally, binds directly to 23S rRNA. The L1 stalk is quite mobile in the ribosome, and is involved in E site tRNA release. Its function is as follows. Protein L1 is also a translational repressor protein, it controls the translation of the L11 operon by binding to its mRNA. This chain is Large ribosomal subunit protein uL1, found in Salmonella agona (strain SL483).